The sequence spans 89 residues: Neuropeptide S (89 aa).

Positions Met1–Cys23 are cleaved as a signal peptide. Positions Tyr24–Arg69 are excised as a propeptide.

It localises to the secreted. May play an important anorexigenic role. Modulates arousal and anxiety as well as increases locomotor activity. Binds to its receptor NPSR1 with nanomolar affinity to increase intracellular calcium concentrations. This is Neuropeptide S (Nps) from Mus musculus (Mouse).